An 88-amino-acid chain; its full sequence is Large ribosomal subunit protein eL31 (88 aa).

It belongs to the eukaryotic ribosomal protein eL31 family.

The polypeptide is Large ribosomal subunit protein eL31 (Methanoregula boonei (strain DSM 21154 / JCM 14090 / 6A8)).